The following is a 260-amino-acid chain: Ubiquinone/menaquinone biosynthesis C-methyltransferase UbiE (260 aa).

S-adenosyl-L-methionine-binding positions include threonine 83, aspartate 104, 132-133 (NA), and serine 149.

It belongs to the class I-like SAM-binding methyltransferase superfamily. MenG/UbiE family.

The catalysed reaction is a 2-demethylmenaquinol + S-adenosyl-L-methionine = a menaquinol + S-adenosyl-L-homocysteine + H(+). It catalyses the reaction a 2-methoxy-6-(all-trans-polyprenyl)benzene-1,4-diol + S-adenosyl-L-methionine = a 5-methoxy-2-methyl-3-(all-trans-polyprenyl)benzene-1,4-diol + S-adenosyl-L-homocysteine + H(+). The protein operates within quinol/quinone metabolism; menaquinone biosynthesis; menaquinol from 1,4-dihydroxy-2-naphthoate: step 2/2. It functions in the pathway cofactor biosynthesis; ubiquinone biosynthesis. Its function is as follows. Methyltransferase required for the conversion of demethylmenaquinol (DMKH2) to menaquinol (MKH2) and the conversion of 2-polyprenyl-6-methoxy-1,4-benzoquinol (DDMQH2) to 2-polyprenyl-3-methyl-6-methoxy-1,4-benzoquinol (DMQH2). The protein is Ubiquinone/menaquinone biosynthesis C-methyltransferase UbiE of Vibrio cholerae serotype O1 (strain ATCC 39315 / El Tor Inaba N16961).